Here is a 235-residue protein sequence, read N- to C-terminus: Type III pantothenate kinase (235 aa).

6–13 provides a ligand contact to ATP; the sequence is DVGNTSLK. Substrate contacts are provided by residues Tyr79 and 86-89; that span reads GIDR. Asp88 functions as the Proton acceptor in the catalytic mechanism. Asp109 provides a ligand contact to K(+). Residue Thr112 participates in ATP binding. Thr164 is a binding site for substrate.

The protein belongs to the type III pantothenate kinase family. In terms of assembly, homodimer. NH4(+) is required as a cofactor. The cofactor is K(+).

It localises to the cytoplasm. It catalyses the reaction (R)-pantothenate + ATP = (R)-4'-phosphopantothenate + ADP + H(+). Its pathway is cofactor biosynthesis; coenzyme A biosynthesis; CoA from (R)-pantothenate: step 1/5. Its function is as follows. Catalyzes the phosphorylation of pantothenate (Pan), the first step in CoA biosynthesis. The chain is Type III pantothenate kinase from Pseudoalteromonas translucida (strain TAC 125).